Reading from the N-terminus, the 427-residue chain is Peptidase B (427 aa).

Lys195 and Asp200 together coordinate Mn(2+). Lys207 is a catalytic residue. 3 residues coordinate Mn(2+): Asp218, Asp277, and Glu279. Arg281 is a catalytic residue.

This sequence belongs to the peptidase M17 family. Homohexamer. Mn(2+) is required as a cofactor.

The protein localises to the cytoplasm. It carries out the reaction Release of an N-terminal amino acid, Xaa, from a peptide or arylamide. Xaa is preferably Glu or Asp but may be other amino acids, including Leu, Met, His, Cys and Gln.. Functionally, probably plays an important role in intracellular peptide degradation. This chain is Peptidase B, found in Salmonella agona (strain SL483).